The chain runs to 378 residues: Chorismate synthase (378 aa).

Arg48 and Arg54 together coordinate NADP(+). Residues 125 to 127, 238 to 239, Gly278, 293 to 297, and Arg319 each bind FMN; these read RSS, NA, and KPTSS.

This sequence belongs to the chorismate synthase family. As to quaternary structure, homotetramer. Requires FMNH2 as cofactor.

The enzyme catalyses 5-O-(1-carboxyvinyl)-3-phosphoshikimate = chorismate + phosphate. Its pathway is metabolic intermediate biosynthesis; chorismate biosynthesis; chorismate from D-erythrose 4-phosphate and phosphoenolpyruvate: step 7/7. Its function is as follows. Catalyzes the anti-1,4-elimination of the C-3 phosphate and the C-6 proR hydrogen from 5-enolpyruvylshikimate-3-phosphate (EPSP) to yield chorismate, which is the branch point compound that serves as the starting substrate for the three terminal pathways of aromatic amino acid biosynthesis. This reaction introduces a second double bond into the aromatic ring system. The polypeptide is Chorismate synthase (Azoarcus sp. (strain BH72)).